The primary structure comprises 279 residues: Calcium-binding protein 4 (279 aa).

Over residues 1-12 (MAEEQGRGRHGP) the composition is skewed to basic and acidic residues. A disordered region spans residues 1-114 (MAEEQGRGRH…PGPQHDAAQR (114 aa)). Ser42 bears the Phosphoserine mark. Residues 55–65 (GPSSSGEQTPM) are compositionally biased toward polar residues. EF-hand domains are found at residues 133-168 (EELD…LGYM), 187-204 (GRVD…KLRE), 210-245 (LGLR…LLGE), and 247-279 (LVGP…LSRH). Ca(2+)-binding residues include Asp146, Asp148, Asp150, Tyr152, and Asp157. Ca(2+)-binding residues include Asp223, Asp225, Asp227, Arg229, Glu234, Asp260, Asn262, Asp264, Thr266, and Glu271.

As to quaternary structure, interacts with CACNA1F and CACNA1D (via IQ domain) in a calcium independent manner. Interacts (via N-terminus) with UNC119. Post-translationally, phosphorylated. Phosphorylation levels change with the light conditions and regulate the activity. Expressed in the retina.

The protein resides in the cytoplasm. It is found in the presynapse. Its function is as follows. May play a role in normal synaptic function, probably through regulation of Ca(2+) influx and neurotransmitter release in photoreceptor synaptic terminals and in auditory transmission. Modulator of CACNA1F, shifting the activation range to more hyperpolarized voltages. The polypeptide is Calcium-binding protein 4 (CABP4) (Bos taurus (Bovine)).